Consider the following 479-residue polypeptide: F-box/LRR-repeat protein 16 (479 aa).

The tract at residues 1 to 62 (MSSPGIDGDP…PTLPPPSLAA (62 aa)) is disordered. The segment covering 47-60 (CQPPPPPTLPPPSL) has biased composition (pro residues). An Omega-N-methylarginine modification is found at R92. An F-box domain is found at 94-139 (PLATDEKILNGLFWYFSACEKCVLAQVCKAWRRVLYQPKFWAGLTP). LRR repeat units follow at residues 244–266 (ITSL…ISQL), 267–290 (LPNL…YFTA), 319–343 (LPNL…LVAE), 345–369 (LRKL…YVAC), 371–395 (LHRL…YLST), 396–420 (MSSL…HLLA), and 446–470 (LQEL…YFSQ).

As to quaternary structure, interacts with SKP1 and CUL1.

Its function is as follows. Substrate-recognition component of the SCF (SKP1-CUL1-F-box protein)-type E3 ubiquitin ligase complex. The chain is F-box/LRR-repeat protein 16 (FBXL16) from Homo sapiens (Human).